The sequence spans 97 residues: U6-theraphotoxin-Hhn1a 3 (97 aa).

The signal sequence occupies residues 1–33; it reads MLIKQFSRRSKNTKVQILLAFAALFVLAVGSYA. Residues 34–61 constitute a propeptide that is removed on maturation; it reads SESKKLDLRDALFSAMFSADYQLNPQER. Cystine bridges form between C63-C77, C70-C82, and C76-C89.

This sequence belongs to the neurotoxin 10 (Hwtx-1) family. 12 (Hntx-12) subfamily. Expressed by the venom gland.

It localises to the secreted. In terms of biological role, ion channel inhibitor. The chain is U6-theraphotoxin-Hhn1a 3 from Cyriopagopus hainanus (Chinese bird spider).